Consider the following 214-residue polypeptide: Dual specificity phosphatase 29 (214 aa).

Residues 46-194 (HVNEVWPNLY…LRELDIELAL (149 aa)) enclose the Tyrosine-protein phosphatase domain. A substrate-binding site is contributed by 138-145 (HCAMGRSR). The active-site Phosphocysteine intermediate is the C139.

Belongs to the protein-tyrosine phosphatase family. Non-receptor class dual specificity subfamily.

The protein localises to the cytoplasm. The protein resides in the nucleus. The enzyme catalyses O-phospho-L-tyrosyl-[protein] + H2O = L-tyrosyl-[protein] + phosphate. It catalyses the reaction O-phospho-L-seryl-[protein] + H2O = L-seryl-[protein] + phosphate. The catalysed reaction is O-phospho-L-threonyl-[protein] + H2O = L-threonyl-[protein] + phosphate. Its function is as follows. Dual specificity phosphatase able to dephosphorylate phosphotyrosine, phosphoserine and phosphothreonine residues within the same substrate, with a preference for phosphotyrosine as a substrate. Involved in the modulation of AMPK and MAPK1/2 signaling pathways. The chain is Dual specificity phosphatase 29 (DUSP29) from Gallus gallus (Chicken).